The sequence spans 221 residues: Pectate lyase C (221 aa).

A signal peptide spans 1–28 (MKRLAGTVILSGLLVCGFGQALPEKALA).

It belongs to the polysaccharide lyase 3 family. It depends on Ca(2+) as a cofactor.

It localises to the secreted. The catalysed reaction is Eliminative cleavage of (1-&gt;4)-alpha-D-galacturonan to give oligosaccharides with 4-deoxy-alpha-D-galact-4-enuronosyl groups at their non-reducing ends.. The enzyme catalyses Eliminative cleavage of (1-&gt;4)-alpha-D-galacturonan methyl ester to give oligosaccharides with 4-deoxy-6-O-methyl-alpha-D-galact-4-enuronosyl groups at their non-reducing ends.. It functions in the pathway glycan metabolism; pectin degradation; 2-dehydro-3-deoxy-D-gluconate from pectin: step 2/5. Its function is as follows. Catalyzes the depolymerization of both polygalacturonate and pectins of methyl esterification degree from 22 to 89%, with an endo mode of action. In contrast to the majority of pectate lyases, displays high activity on highly methylated pectins. The protein is Pectate lyase C (pelC) of Bacillus licheniformis (strain ATCC 14580 / DSM 13 / JCM 2505 / CCUG 7422 / NBRC 12200 / NCIMB 9375 / NCTC 10341 / NRRL NRS-1264 / Gibson 46).